We begin with the raw amino-acid sequence, 188 residues long: C-type lectin domain family 5 member A (188 aa).

Residues 1–4 are Cytoplasmic-facing; sequence MNWH. The helical; Signal-anchor for type II membrane protein transmembrane segment at 5 to 27 threads the bilayer; the sequence is MIISGLIVVVLKVVGMTLFLLYF. Residues 28-188 lie on the Extracellular side of the membrane; that stretch reads PQIFNKSNDG…YRRICEKNAK (161 aa). Asn-32 carries N-linked (GlcNAc...) asparagine glycosylation. A disulfide bond links Cys-71 and Cys-82. Positions 78–184 constitute a C-type lectin domain; that stretch reads YQARCFFLST…CDISYRRICE (107 aa). Residues Asn-93, Asn-144, and Asn-151 are each glycosylated (N-linked (GlcNAc...) asparagine). Disulfide bonds link Cys-99-Cys-183 and Cys-161-Cys-175.

As to quaternary structure, monomer. Homodimer. The majority of CLEC5A is expressed as a monomeric form on macrophages. Interacts with TYROBP/DAP12. The interaction with TYROBP is required for CLEC5A cell surface expression. Interacts with HCST/DAP10. Forms a CLEC5A/TYROBP/HCST trimolecular complex depending almost solely on TYROBP. (Microbial infection) Interacts with dengue virus envelope protein E. Post-translationally, N-glycosylated. Contains sialic acid residues. In terms of tissue distribution, highly expressed in bone marrow with lower levels in synovium, lung and bronchus. Expressed in peripheral blood monocytes and in the monocyte/macrophage cell lines U-937 and Mono-Mac-6, but not in cell lines of other origins. Expression is down-regulated when monocytes differentiate into dendritic cells.

The protein resides in the cell membrane. In terms of biological role, functions as a positive regulator of osteoclastogenesis. Cell surface receptor that signals via TYROBP. Regulates inflammatory responses. Functionally, (Microbial infection) Critical macrophage receptor for dengue virus serotypes 1-4. The binding of dengue virus to CLEC5A triggers signaling through the phosphorylation of TYROBP. This interaction does not result in viral entry, but stimulates pro-inflammatory cytokine release. This chain is C-type lectin domain family 5 member A (CLEC5A), found in Homo sapiens (Human).